Here is a 68-residue protein sequence, read N- to C-terminus: DNA-directed RNA polymerase subunit omega (68 aa).

Belongs to the RNA polymerase subunit omega family. As to quaternary structure, the RNAP catalytic core consists of 2 alpha, 1 beta, 1 beta' and 1 omega subunit. When a sigma factor is associated with the core the holoenzyme is formed, which can initiate transcription.

It carries out the reaction RNA(n) + a ribonucleoside 5'-triphosphate = RNA(n+1) + diphosphate. Its function is as follows. Promotes RNA polymerase assembly. Latches the N- and C-terminal regions of the beta' subunit thereby facilitating its interaction with the beta and alpha subunits. This chain is DNA-directed RNA polymerase subunit omega, found in Listeria monocytogenes serotype 4b (strain CLIP80459).